We begin with the raw amino-acid sequence, 750 residues long: Ribosomal RNA large subunit methyltransferase K/L (750 aa).

The 112-residue stretch at 46–157 folds into the THUMP domain; the sequence is TAYRLCLWSR…RGEAILSLDL (112 aa).

It belongs to the methyltransferase superfamily. RlmKL family.

The protein resides in the cytoplasm. The enzyme catalyses guanosine(2445) in 23S rRNA + S-adenosyl-L-methionine = N(2)-methylguanosine(2445) in 23S rRNA + S-adenosyl-L-homocysteine + H(+). It catalyses the reaction guanosine(2069) in 23S rRNA + S-adenosyl-L-methionine = N(2)-methylguanosine(2069) in 23S rRNA + S-adenosyl-L-homocysteine + H(+). Its function is as follows. Specifically methylates the guanine in position 2445 (m2G2445) and the guanine in position 2069 (m7G2069) of 23S rRNA. This chain is Ribosomal RNA large subunit methyltransferase K/L, found in Pseudomonas syringae pv. tomato (strain ATCC BAA-871 / DC3000).